Here is a 123-residue protein sequence, read N- to C-terminus: Fluoride-specific ion channel FluC (123 aa).

The next 4 membrane-spanning stretches (helical) occupy residues 4–24, 31–51, 64–83, and 100–120; these read VYIA…SGWV, ALPY…GLLM, IRMG…STFS, and ANIL…IFLA. Na(+)-binding residues include glycine 74 and threonine 77.

This sequence belongs to the fluoride channel Fluc/FEX (TC 1.A.43) family.

It localises to the cell inner membrane. It catalyses the reaction fluoride(in) = fluoride(out). Na(+) is not transported, but it plays an essential structural role and its presence is essential for fluoride channel function. Fluoride-specific ion channel. Important for reducing fluoride concentration in the cell, thus reducing its toxicity. The protein is Fluoride-specific ion channel FluC of Syntrophotalea carbinolica (strain DSM 2380 / NBRC 103641 / GraBd1) (Pelobacter carbinolicus).